Consider the following 827-residue polypeptide: NT-3 growth factor receptor (827 aa).

An N-terminal signal peptide occupies residues 1–31; that stretch reads MDVSLCPTKCTFWRVFLLWSIWGDYLLSVLA. 2 disulfides stabilise this stretch: Cys32–Cys38 and Cys36–Cys45. Residues 32–430 lie on the Extracellular side of the membrane; it reads CPANCLCSKT…ITVTHKPEED (399 aa). N-linked (GlcNAc...) asparagine glycans are attached at residues Asn68, Asn72, and Asn79. 2 LRR repeats span residues 104 to 125 and 128 to 149; these read GLQR…AFAK and HLRY…LFQT. The LRRCT domain occupies 160–209; it reads NPFNCSCDIRWIQLWQEKGEANLQSQQLHCMNLDTAVILLRNMNITQCDL. A glycan (N-linked (GlcNAc...) asparagine) is linked at Asn163. 2 cysteine pairs are disulfide-bonded: Cys164-Cys189 and Cys166-Cys207. 7 N-linked (GlcNAc...) asparagine glycosylation sites follow: Asn203, Asn218, Asn232, Asn259, Asn267, Asn272, and Asn294. 2 Ig-like C2-type domains span residues 210 to 300 and 319 to 382; these read PEIS…VLLT and HCIA…VATN. Cys231 and Cys284 are joined by a disulfide. Cys320 and Cys362 form a disulfide bridge. N-linked (GlcNAc...) asparagine glycans are attached at residues Asn375 and Asn388. A helical membrane pass occupies residues 431–455; sequence TFGVSIAVGLAAFACVLLVVLFIMI. The Cytoplasmic segment spans residues 456-827; the sequence is NKYGRRSKFG…ATPIYLDILG (372 aa). A Phosphotyrosine; by autocatalysis modification is found at Tyr518. One can recognise a Protein kinase domain in the interval 540 to 812; the sequence is IVLKRELGEG…LNIKEIYKIL (273 aa). ATP contacts are provided by residues 546–554 and Lys574; that span reads LGEGAFGKV. Asp681 (proton acceptor) is an active-site residue. Tyr707, Tyr711, Tyr712, and Tyr822 each carry phosphotyrosine; by autocatalysis.

Belongs to the protein kinase superfamily. Tyr protein kinase family. Insulin receptor subfamily. In terms of assembly, exists in a dynamic equilibrium between monomeric (low affinity) and dimeric (high affinity) structures. Interacts with PTPRS. Post-translationally, ligand-mediated auto-phosphorylation.

Its subcellular location is the membrane. It catalyses the reaction L-tyrosyl-[protein] + ATP = O-phospho-L-tyrosyl-[protein] + ADP + H(+). Its function is as follows. Receptor tyrosine kinase involved in nervous system and probably heart development. Upon binding of its ligand NTF3/neurotrophin-3, NTRK3 autophosphorylates and activates different signaling pathways, including the phosphatidylinositol 3-kinase/AKT and the MAPK pathways, that control cell survival and differentiation. The KT and KD isoforms fail to stimulate transformation, process outgrowth or survival. Isoform KI25 exhibits tyrosine phosphorylation in the absence of ligand and is unable to mediate survival of neuronal cells. The protein is NT-3 growth factor receptor (NTRK3) of Gallus gallus (Chicken).